The following is a 487-amino-acid chain: Bifunctional protein GlmU (487 aa).

Residues 1–235 (MSHSPTPLAA…PEEASGVNDR (235 aa)) are pyrophosphorylase. UDP-N-acetyl-alpha-D-glucosamine contacts are provided by residues 13–16 (LAAG), Lys-27, Gln-82, 87–88 (GT), 110–112 (SGD), Gly-147, Glu-162, Asn-177, and Asn-233. Asp-112 is a Mg(2+) binding site. Asn-233 provides a ligand contact to Mg(2+). The interval 236-256 (EELARAGRVLLRRRASELMRS) is linker. The tract at residues 257-487 (GVTIEDPERF…ADSPRGGRAS (231 aa)) is N-acetyltransferase. Arg-339 and Lys-357 together coordinate UDP-N-acetyl-alpha-D-glucosamine. His-369 acts as the Proton acceptor in catalysis. UDP-N-acetyl-alpha-D-glucosamine contacts are provided by Tyr-372 and Asn-383. Residues Ala-386, 392-393 (NY), Ser-411, Ala-429, and Arg-446 contribute to the acetyl-CoA site. Residues 453-487 (EGWVARRKAEAQNKGAAEAAPAPSPADSPRGGRAS) are disordered. A compositionally biased stretch (low complexity) spans 468–481 (AAEAAPAPSPADSP).

It in the N-terminal section; belongs to the N-acetylglucosamine-1-phosphate uridyltransferase family. The protein in the C-terminal section; belongs to the transferase hexapeptide repeat family. Homotrimer. Mg(2+) is required as a cofactor.

The protein resides in the cytoplasm. The enzyme catalyses alpha-D-glucosamine 1-phosphate + acetyl-CoA = N-acetyl-alpha-D-glucosamine 1-phosphate + CoA + H(+). It catalyses the reaction N-acetyl-alpha-D-glucosamine 1-phosphate + UTP + H(+) = UDP-N-acetyl-alpha-D-glucosamine + diphosphate. Its pathway is nucleotide-sugar biosynthesis; UDP-N-acetyl-alpha-D-glucosamine biosynthesis; N-acetyl-alpha-D-glucosamine 1-phosphate from alpha-D-glucosamine 6-phosphate (route II): step 2/2. It functions in the pathway nucleotide-sugar biosynthesis; UDP-N-acetyl-alpha-D-glucosamine biosynthesis; UDP-N-acetyl-alpha-D-glucosamine from N-acetyl-alpha-D-glucosamine 1-phosphate: step 1/1. The protein operates within bacterial outer membrane biogenesis; LPS lipid A biosynthesis. Its function is as follows. Catalyzes the last two sequential reactions in the de novo biosynthetic pathway for UDP-N-acetylglucosamine (UDP-GlcNAc). The C-terminal domain catalyzes the transfer of acetyl group from acetyl coenzyme A to glucosamine-1-phosphate (GlcN-1-P) to produce N-acetylglucosamine-1-phosphate (GlcNAc-1-P), which is converted into UDP-GlcNAc by the transfer of uridine 5-monophosphate (from uridine 5-triphosphate), a reaction catalyzed by the N-terminal domain. In Anaeromyxobacter sp. (strain Fw109-5), this protein is Bifunctional protein GlmU.